The primary structure comprises 30 residues: Varv peptide G (30 aa).

Positions 1 to 30 form a cross-link, cyclopeptide (Gly-Asn); the sequence is GVPVCGETCFGGTCNTPGCSCDPWPVCSRN. 3 disulfides stabilise this stretch: Cys-5/Cys-19, Cys-9/Cys-21, and Cys-14/Cys-27.

In terms of processing, this is a cyclic peptide.

Functionally, probably participates in a plant defense mechanism. The sequence is that of Varv peptide G from Viola arvensis (European field pansy).